The sequence spans 349 residues: MAELLAIKWDDNRDKLILLDQTILPNKIEYIEYDTAEGVYDSIKDMIVRGAPAIGVTAAYGLYFAAKVAPEDNFENFFKYLKEKSSYLDSSRPTAVNLSWALKVMESKALENKDKDVKEIKSILREEAKRIHEEDIEICKAIGENLITLLKDGVGILTHCNAGQLATSKYGTATSPMYLAKEKGWNFKVYSDETRPRLQGSTLTALELYEAGIDVTTITDNMAAMVMSQGKIDAVIVGCDRIAANGDTANKIGTMGVSILAKYFGIPMYIAAPTPSIDMNTKTGKDIPIEERNSEEITSRFGVWTAPKGVKVYNPGFDVTPHENITAIVTEKGIVYPPFKENLKKLFEK.

Substrate-binding positions include 49–51, R92, and Q199; that span reads RGA. D240 (proton donor) is an active-site residue. 250–251 contacts substrate; the sequence is NK.

The protein belongs to the EIF-2B alpha/beta/delta subunits family. DrdI subfamily.

It catalyses the reaction 5-deoxy-alpha-D-ribose 1-phosphate = 5-deoxy-D-ribulose 1-phosphate. The protein operates within carbohydrate degradation. In terms of biological role, catalyzes the isomerization of 5-deoxy-alpha-D-ribose 1-phosphate to 5-deoxy-D-ribulose 1-phosphate, as part of a 5-deoxyribose salvage pathway that recycles this toxic radical SAM enzyme by-product to mainstream metabolites. The chain is 5-deoxyribose 1-phosphate isomerase from Clostridium botulinum (strain Kyoto / Type A2).